The primary structure comprises 832 residues: Protein PPP4R3C (832 aa).

Residues 708-832 are disordered; that stretch reads RTQEGEAVMP…SPKKKPHLSS (125 aa). Basic and acidic residues-rich tracts occupy residues 725 to 735 and 749 to 765; these read FTETKRTHQEG and METK…DSPK. Residues 769–779 are compositionally biased toward low complexity; it reads SGDFKFSSSYS. Residues 801–820 show a composition bias toward acidic residues; sequence PDDEEEKEEDEEEKEEDKED.

The protein belongs to the SMEK family.

The polypeptide is Protein PPP4R3C (Homo sapiens (Human)).